A 287-amino-acid chain; its full sequence is SPX domain-containing protein 2 (287 aa).

In terms of domain architecture, SPX spans 1–162; sequence MKFGKSLSNQ…GALIRLPFIQ (162 aa). Residues 36 to 50 are compositionally biased toward basic and acidic residues; that stretch reads EPRSVENRPNKRSRS. 2 disordered regions span residues 36-61 and 194-213; these read EPRSVENRPNKRSRSDSNSVDTDPTV and KSRNLDEEGEPTTSGMVKTG.

The protein resides in the nucleus. May inhibit PHR1 DNA-binding activity in a Pi-dependent manner. The sequence is that of SPX domain-containing protein 2 from Arabidopsis thaliana (Mouse-ear cress).